A 348-amino-acid chain; its full sequence is Putative S-adenosyl-L-methionine-dependent methyltransferase Mb3432 (348 aa).

Residues D171 and 200–201 (DL) each bind S-adenosyl-L-methionine.

It belongs to the UPF0677 family.

Its function is as follows. Exhibits S-adenosyl-L-methionine-dependent methyltransferase activity. This is Putative S-adenosyl-L-methionine-dependent methyltransferase Mb3432 from Mycobacterium bovis (strain ATCC BAA-935 / AF2122/97).